A 78-amino-acid chain; its full sequence is Translation initiation factor IF-1, chloroplastic (78 aa).

An S1-like domain is found at 1 to 73 (MASNRELIEM…TKGRIIYRLR (73 aa)).

Belongs to the IF-1 family. As to quaternary structure, component of the 30S ribosomal translation pre-initiation complex which assembles on the 30S ribosome in the order IF-2 and IF-3, IF-1 and N-formylmethionyl-tRNA(fMet); mRNA recruitment can occur at any time during PIC assembly.

It is found in the plastid. The protein resides in the chloroplast. Its function is as follows. One of the essential components for the initiation of protein synthesis. Stabilizes the binding of IF-2 and IF-3 on the 30S subunit to which N-formylmethionyl-tRNA(fMet) subsequently binds. Helps modulate mRNA selection, yielding the 30S pre-initiation complex (PIC). Upon addition of the 50S ribosomal subunit IF-1, IF-2 and IF-3 are released leaving the mature 70S translation initiation complex. The sequence is that of Translation initiation factor IF-1, chloroplastic from Ostreococcus tauri.